The following is a 306-amino-acid chain: MKPTQAILAEILDEVRPLIGQGKVADYIPALARVSNQKLAIAVYTNEGEVIQAGDADEAFSVQSISKALSLTLAMVLYKPEEIWQRVGKEPSGQAFNSMIQLEMEHGIPRNPFINAGAIVVADLLQSRLSAPRHRLLEFVRQLSGDTHIVYDKVVAASEMMHSDRNAAIAYLMRSFGNFENDVIPVLNNYFHACALKMTCVDLAKTFSYLANKGVSVQTKKEIITPVQTKQLNALLATCGLYDGAGEFAYRVGMPGKSGVGGGIIAIVPGEMTIAVWSPELDASGNSLAGTQALELLSERIGRSIF.

Residues S64, N115, E159, N166, Y190, Y242, and V260 each coordinate substrate.

The protein belongs to the glutaminase family. In terms of assembly, homotetramer.

The catalysed reaction is L-glutamine + H2O = L-glutamate + NH4(+). The protein is Glutaminase of Vibrio atlanticus (strain LGP32) (Vibrio splendidus (strain Mel32)).